The primary structure comprises 1382 residues: ABC-type transporter atr1 (1382 aa).

Positions 1 to 12 are enriched in basic and acidic residues; that stretch reads MRFRSDSRADHQ. The segment at 1–56 is disordered; sequence MRFRSDSRADHQHPKKQGSMDPDTIQALKYQDRSSSSSSNNKPKEKVGSASTSPSP. N-linked (GlcNAc...) asparagine glycosylation is present at asparagine 62. The next 6 membrane-spanning stretches (helical) occupy residues 101–121, 159–179, 233–253, 259–279, 339–359, and 374–394; these read LFGTGMAIAAGAAQPLMNIFI, LILLYLGIGMFFASMLYMAVF, LPMAIMYFSTFVTAAAVAFAF, LVLLPIAPLILLAGGVMGALT, GVGVGALLFIIYAGYALAFFY, and IVSVVFANFAGAFAIANLFSM. The ABC transmembrane type-1 1 domain maps to 101 to 400; it reads LFGTGMAIAA…LFSMIENFTM (300 aa). Asparagine 397 is a glycosylation site (N-linked (GlcNAc...) asparagine). Residues 445–688 enclose the ABC transporter 1 domain; it reads LKLDHVHFAY…PNGTFASMLR (244 aa). ATP is bound at residue 480 to 487; the sequence is GLSGSGKS. Asparagine 680 is a glycosylation site (N-linked (GlcNAc...) asparagine). Positions 738-768 are disordered; the sequence is SVKPKDPSKNFEPPGESYASPAADGVKQDAP. The region spanning 797 to 1094 is the ABC transmembrane type-1 2 domain; sequence LGSLCAAIIG…IFNYSADFSS (298 aa). Residues 800 to 820 traverse the membrane as a helical segment; it reads LCAAIIGAVYPVYAILFGTAI. Asparagine 827 carries N-linked (GlcNAc...) asparagine glycosylation. The helical transmembrane segment at 848-868 threads the bilayer; that stretch reads ISSGSFFIVAVGCAFISFYHV. Asparagine 903 carries N-linked (GlcNAc...) asparagine glycosylation. 2 helical membrane passes run 911-931 and 951-973; these read SLSVLSQGIYGGVGPTLGSIV and LALVVIASTPLTITAGLLRLRVL. N-linked (GlcNAc...) asparagine glycosylation occurs at asparagine 1020. The next 2 helical transmembrane spans lie at 1034 to 1054 and 1067 to 1087; these read VLFGLSQCVQLLVTALAFWYG and GFFTILISVVYGSVQAGNIFN. The region spanning 1136 to 1377 is the ABC transporter 2 domain; the sequence is IALKEVTFRY…DGLFALMARL (242 aa). Position 1171–1178 (1171–1178) interacts with ATP; sequence GGSGSGKS. The N-linked (GlcNAc...) asparagine glycan is linked to asparagine 1324.

Belongs to the ABC transporter superfamily. ABCB family. Multidrug resistance exporter (TC 3.A.1.201) subfamily.

The protein localises to the cell membrane. Functionally, ABC-type transporter; part of the gene cluster that mediates the biosynthesis of the glycolipid biosurfactant ustilagic acid (UA). UA is a secreted cellobiose glycolipid that is toxic for many microorganisms and confers biocontrol activity to U.maydis. Export of UA is presumably catalyzed by the ABC transporter atr1. Atr1 appears to be quite unspecific, as many of the UA derivatives produced by cluster mutant strains are readily exported. This Mycosarcoma maydis (Corn smut fungus) protein is ABC-type transporter atr1.